A 57-amino-acid chain; its full sequence is Large ribosomal subunit protein bL32 (57 aa).

It belongs to the bacterial ribosomal protein bL32 family.

The polypeptide is Large ribosomal subunit protein bL32 (Corynebacterium glutamicum (strain R)).